The following is a 573-amino-acid chain: 60 kDa heat shock protein, mitochondrial (573 aa).

The N-terminal 26 residues, 1–26 (MLRLPTVFRQMRPVSRVLAPHLTRAY), are a transit peptide targeting the mitochondrion. Lys-31 carries the N6-succinyllysine modification. Phosphoserine occurs at positions 67 and 70. Lys-75 contributes to the ATP binding site. The residue at position 75 (Lys-75) is an N6-acetyllysine. Position 82 is an N6-acetyllysine; alternate (Lys-82). Lys-82 is subject to N6-succinyllysine; alternate. Residue Lys-87 is modified to N6-acetyllysine. Tyr-90 is subject to Phosphotyrosine. Lys-91 carries the post-translational modification N6-acetyllysine. An ATP-binding site is contributed by 111–115 (DGTTT). An N6-acetyllysine; alternate modification is found at Lys-125. Lys-125 is modified (N6-succinyllysine; alternate). N6-acetyllysine is present on Lys-130. Lys-133 carries the N6-acetyllysine; alternate modification. Lys-133 is subject to N6-succinyllysine; alternate. N6-malonyllysine; alternate is present on Lys-133. An N6-acetyllysine modification is found at Lys-156. N6-acetyllysine; alternate is present on residues Lys-191, Lys-202, Lys-205, Lys-218, and Lys-236. N6-succinyllysine; alternate is present on residues Lys-191, Lys-202, Lys-205, Lys-218, and Lys-236. Lys-249 is modified (N6-acetyllysine). Lys-250 is subject to N6-acetyllysine; alternate. At Lys-250 the chain carries N6-succinyllysine; alternate. N6-acetyllysine is present on residues Lys-269 and Lys-292. Position 301 is an N6-succinyllysine (Lys-301). Lys-314 is modified (N6-acetyllysine). Lys-352 carries the N6-acetyllysine; alternate modification. Residue Lys-352 is modified to N6-succinyllysine; alternate. Lys-359 and Lys-389 each carry N6-acetyllysine. The residue at position 396 (Lys-396) is an N6-acetyllysine; alternate. The residue at position 396 (Lys-396) is an N6-succinyllysine; alternate. A Phosphoserine modification is found at Ser-410. Gly-440 is an ATP binding site. Lys-469 bears the N6-acetyllysine mark. The residue at position 481 (Lys-481) is an N6-acetyllysine; alternate. Residue Lys-481 is modified to N6-succinyllysine; alternate. Ser-488 is modified (phosphoserine). Asp-520 serves as a coordination point for ATP. Lys-551 is covalently cross-linked (Glycyl lysine isopeptide (Lys-Gly) (interchain with G-Cter in SUMO2)).

The protein belongs to the chaperonin (HSP60) family. As to quaternary structure, homoheptamer arranged in a ring structure. The functional units of these chaperonins consist of heptameric rings of the large subunit Hsp60, which function as a back-to-back double ring. Interacts with 2 heptameric Hsp10 rings to form the symmetrical football complex. Interacts with HRAS. Interacts with ATAD3A. Interacts with ETFBKMT and EEF1AKMT3. Interacts with MFHAS1. In terms of assembly, (Microbial infection) Interacts with hepatitis B virus/HBV protein X. (Microbial infection) Interacts with HTLV-1 protein p40tax.

Its subcellular location is the mitochondrion matrix. The catalysed reaction is ATP + H2O + a folded polypeptide = ADP + phosphate + an unfolded polypeptide.. Chaperonin implicated in mitochondrial protein import and macromolecular assembly. Together with Hsp10, facilitates the correct folding of imported proteins. May also prevent misfolding and promote the refolding and proper assembly of unfolded polypeptides generated under stress conditions in the mitochondrial matrix. The functional units of these chaperonins consist of heptameric rings of the large subunit Hsp60, which function as a back-to-back double ring. In a cyclic reaction, Hsp60 ring complexes bind one unfolded substrate protein per ring, followed by the binding of ATP and association with 2 heptameric rings of the co-chaperonin Hsp10. This leads to sequestration of the substrate protein in the inner cavity of Hsp60 where, for a certain period of time, it can fold undisturbed by other cell components. Synchronous hydrolysis of ATP in all Hsp60 subunits results in the dissociation of the chaperonin rings and the release of ADP and the folded substrate protein. The sequence is that of 60 kDa heat shock protein, mitochondrial (HSPD1) from Homo sapiens (Human).